We begin with the raw amino-acid sequence, 1407 residues long: DNA-directed RNA polymerase subunit beta' (1407 aa).

Positions 70, 72, 85, and 88 each coordinate Zn(2+). The Mg(2+) site is built by Asp-460, Asp-462, and Asp-464. Residues Cys-814, Cys-888, Cys-895, and Cys-898 each contribute to the Zn(2+) site.

The protein belongs to the RNA polymerase beta' chain family. In terms of assembly, the RNAP catalytic core consists of 2 alpha, 1 beta, 1 beta' and 1 omega subunit. When a sigma factor is associated with the core the holoenzyme is formed, which can initiate transcription. It depends on Mg(2+) as a cofactor. Requires Zn(2+) as cofactor.

The enzyme catalyses RNA(n) + a ribonucleoside 5'-triphosphate = RNA(n+1) + diphosphate. Functionally, DNA-dependent RNA polymerase catalyzes the transcription of DNA into RNA using the four ribonucleoside triphosphates as substrates. The chain is DNA-directed RNA polymerase subunit beta' from Pectobacterium atrosepticum (strain SCRI 1043 / ATCC BAA-672) (Erwinia carotovora subsp. atroseptica).